The primary structure comprises 779 residues: MPVVKGGVWTNIEDEILKASVSKYGLNQWARVSSLLARKTPKQCKARWNEWLDPSIKKIEWSKEEDEKLLHLAKLMPTQWRTIAPIVGRTANQCLERYQRLLDEAEQREASALGLTGPDGGEAHAPSADDVRKLRPGEVDPDPETKPARPDTIDLDEDEKEMLSEARARLANTQGKKAKRKARERQQEESRRLAALQKRRELKTAGINIKVTTKKQGQMDYNADIPFEKKPVPGFYDTTEEMSRNEYQRAHFDPKKQQVGNKRKGEEDERDGKRRKGDKDPSVQAALKAGQLQKMREAEQSSKRRALVLPAPQVGEGELEEIVKMGMIGERANMLARESDNDATRGLINNYSTLNTNAPIRTPMAPAQEDHIANEIRNIRALTETQSSLLGGENTPLHQGVGSTGFESVAPRKQVMSTPNPLATPLRAAGAGPGATPLRVGQTPLRTPRDTFALNDAGDEMSMVGGTPRDVKMREMSIRHQLKQGLASLPKPKETEWELELPDDQQEPKTAEQLEEDAAERDRREREIREARELLERKRRTQVMQRDLPRPVQVDYQSLLKEASQAEDPVKVLIAREAALLVAHDATKYPLPGAQPTGRALEIQKIDDAALQEAKLQVLMEIKDKPKPEEVQAVWEKSNSSSLLLGLGCYEDDEEEEQISTMQIALEEVIDQIVASAEKGNKLEKKLNLHLGGYKNRAEMLRKKISEAHEALEKANNALGAFKVLQSSEQAAIRNRLAALREEVGFVSTREREAQELYRRTREELDALTLNGPKANGFR.

HTH myb-type domains are found at residues 1 to 56 (MPVV…DPSI) and 57 to 106 (KKIE…DEAE). 2 DNA-binding regions (H-T-H motif) span residues 29 to 52 (WARVSSLLARKTPKQCKARWNEWL) and 80 to 102 (WRTIAPIVGRTANQCLERYQRLL). Disordered stretches follow at residues 113 to 192 (LGLT…ESRR), 246 to 284 (EYQRAHFDPKKQQVGNKRKGEEDERDGKRRKGDKDPSVQ), 424 to 448 (TPLRAAGAGPGATPLRVGQTPLRTP), and 497 to 525 (WELELPDDQQEPKTAEQLEEDAAERDRRE). Positions 127–152 (SADDVRKLRPGEVDPDPETKPARPDT) are enriched in basic and acidic residues. Residues 157-204 (EDEKEMLSEARARLANTQGKKAKRKARERQQEESRRLAALQKRRELKT) adopt a coiled-coil conformation. Basic and acidic residues-rich tracts occupy residues 246–256 (EYQRAHFDPKK) and 263–281 (RKGEEDERDGKRRKGDKDP). Residues 653-772 (DEEEEQISTM…EELDALTLNG (120 aa)) are a coiled coil.

Belongs to the CEF1 family. As to quaternary structure, associated with the spliceosome.

The protein resides in the cytoplasm. It is found in the nucleus. Its function is as follows. Involved in pre-mRNA splicing and cell cycle control. The chain is Pre-mRNA-splicing factor cef-1 (cef-1) from Neurospora crassa (strain ATCC 24698 / 74-OR23-1A / CBS 708.71 / DSM 1257 / FGSC 987).